The chain runs to 425 residues: Glutamyl-tRNA reductase (425 aa).

Residues 47 to 50, Ser-107, 112 to 114, and Gln-118 each bind substrate; these read TCNR and EDQ. Cys-48 (nucleophile) is an active-site residue. An NADP(+)-binding site is contributed by 187–192; the sequence is GAGHMA.

It belongs to the glutamyl-tRNA reductase family. As to quaternary structure, homodimer.

The catalysed reaction is (S)-4-amino-5-oxopentanoate + tRNA(Glu) + NADP(+) = L-glutamyl-tRNA(Glu) + NADPH + H(+). The protein operates within porphyrin-containing compound metabolism; protoporphyrin-IX biosynthesis; 5-aminolevulinate from L-glutamyl-tRNA(Glu): step 1/2. It participates in porphyrin-containing compound metabolism; chlorophyll biosynthesis. Its function is as follows. Catalyzes the NADPH-dependent reduction of glutamyl-tRNA(Glu) to glutamate 1-semialdehyde (GSA). This chain is Glutamyl-tRNA reductase, found in Roseiflexus castenholzii (strain DSM 13941 / HLO8).